A 530-amino-acid chain; its full sequence is AarF domain-containing protein kinase 1 (530 aa).

The region spanning 155–467 is the Protein kinase domain; it reads SFDDTPLGTA…ASSFLNMSRC (313 aa). ATP is bound by residues 161-169 and Lys-183; that span reads LGTASLAQV. The active-site Proton acceptor is the Asp-315.

The protein belongs to the protein kinase superfamily. ADCK protein kinase family.

The protein resides in the mitochondrion. Functionally, appears to be essential for maintaining mitochondrial cristae formation and mitochondrial function by acting via YME1L1 in a kinase-independent manner to regulate essential mitochondrial structural proteins OPA1 and IMMT. The action of this enzyme is not yet clear. It is not known if it has protein kinase activity and what type of substrate it would phosphorylate (Ser, Thr or Tyr). The protein is AarF domain-containing protein kinase 1 of Homo sapiens (Human).